Consider the following 236-residue polypeptide: Baculoviral IAP repeat-containing protein 8 (236 aa).

The stretch at Trp-7–Leu-70 is one BIR repeat. Zn(2+)-binding residues include Cys-39, Cys-42, His-59, and Cys-66. The segment at Cys-189–Asn-224 adopts an RING-type zinc-finger fold.

Belongs to the IAP family. In terms of assembly, binds to caspase-9.

Its subcellular location is the cytoplasm. Protects against apoptosis mediated by BAX. This Gorilla gorilla gorilla (Western lowland gorilla) protein is Baculoviral IAP repeat-containing protein 8 (BIRC8).